Here is a 696-residue protein sequence, read N- to C-terminus: Transcriptional regulatory protein pro1 (696 aa).

The segment at 1-48 (MSTQSPNHHEDITKTSSVNMTTTTTTTKTKAAAKAGTNAAPKQKTQMH) is disordered. Residues 21 to 40 (TTTTTTTKTKAAAKAGTNAA) show a composition bias toward low complexity. The segment at residues 55–82 (CYTCRLRRKKCDEGSPMCTACKHLGLCC) is a DNA-binding region (zn(2)-C6 fungal-type). The interval 112–145 (LSEKSSHTIQTSINTPPGLSHSLPTSATFSDPLD) is disordered. A compositionally biased stretch (polar residues) spans 118-140 (HTIQTSINTPPGLSHSLPTSATF).

It localises to the nucleus. Its function is as follows. May be involved in fruiting body development. This is Transcriptional regulatory protein pro1 (adv-1) from Neurospora crassa (strain ATCC 24698 / 74-OR23-1A / CBS 708.71 / DSM 1257 / FGSC 987).